The primary structure comprises 702 residues: Arginine decarboxylase 1, chloroplastic (702 aa).

The transit peptide at 1-52 directs the protein to the chloroplast; it reads MPALAFVDTPIDTFSSIFTPSSVSTAVVDGSCHWSPSLSSSLYRIDGWGAPY. An N6-(pyridoxal phosphate)lysine modification is found at K136. Pyridoxal 5'-phosphate is bound by residues S288, G325, and 374 to 377; that span reads ESGR. Position 320–330 (320–330) interacts with substrate; sequence IDIGGGLGIDY. 436 to 437 contributes to the substrate binding site; sequence YV. C524 serves as the catalytic Proton donor; shared with dimeric partner. D525 is a substrate binding site. Y565 serves as a coordination point for pyridoxal 5'-phosphate.

The protein belongs to the Orn/Lys/Arg decarboxylase class-II family. SpeA subfamily. In terms of assembly, homodimer. Only the dimer is catalytically active, as the active sites are constructed of residues from both monomers. May form a head-to-tail homodimer. Homodimer and heterodimer with ADC2. It depends on pyridoxal 5'-phosphate as a cofactor. Mg(2+) serves as cofactor.

It is found in the plastid. The protein resides in the chloroplast. The protein localises to the cytoplasm. It localises to the cytosol. It carries out the reaction L-arginine + H(+) = agmatine + CO2. Its pathway is amine and polyamine biosynthesis; agmatine biosynthesis; agmatine from L-arginine: step 1/1. Functionally, required for the biosynthesis of putrescine. Catalyzes the first step of polyamine (PA) biosynthesis to produce putrescine from arginine. Is a minor contributor to basal arginine decarboxylase (ADC) activity and putrescine biosynthesis. Accumulation of putrescine plays a positive role in freezing tolerance. Production of polyamines is essential for normal seed development. Controls PA homeostasis which is crucial for normal plant growth and development. The chain is Arginine decarboxylase 1, chloroplastic from Arabidopsis thaliana (Mouse-ear cress).